The following is a 217-amino-acid chain: Probable transaldolase (217 aa).

K83 functions as the Schiff-base intermediate with substrate in the catalytic mechanism.

This sequence belongs to the transaldolase family. Type 3B subfamily.

The protein localises to the cytoplasm. It carries out the reaction D-sedoheptulose 7-phosphate + D-glyceraldehyde 3-phosphate = D-erythrose 4-phosphate + beta-D-fructose 6-phosphate. The protein operates within carbohydrate degradation; pentose phosphate pathway; D-glyceraldehyde 3-phosphate and beta-D-fructose 6-phosphate from D-ribose 5-phosphate and D-xylulose 5-phosphate (non-oxidative stage): step 2/3. Functionally, transaldolase is important for the balance of metabolites in the pentose-phosphate pathway. The chain is Probable transaldolase from Fervidobacterium nodosum (strain ATCC 35602 / DSM 5306 / Rt17-B1).